The chain runs to 421 residues: 3-isopropylmalate dehydratase large subunit (421 aa).

[4Fe-4S] cluster-binding residues include cysteine 292, cysteine 352, and cysteine 355.

It belongs to the aconitase/IPM isomerase family. LeuC type 2 subfamily. As to quaternary structure, heterodimer of LeuC and LeuD. It depends on [4Fe-4S] cluster as a cofactor.

It carries out the reaction (2R,3S)-3-isopropylmalate = (2S)-2-isopropylmalate. The protein operates within amino-acid biosynthesis; L-leucine biosynthesis; L-leucine from 3-methyl-2-oxobutanoate: step 2/4. Its function is as follows. Catalyzes the isomerization between 2-isopropylmalate and 3-isopropylmalate, via the formation of 2-isopropylmaleate. The chain is 3-isopropylmalate dehydratase large subunit from Herpetosiphon aurantiacus (strain ATCC 23779 / DSM 785 / 114-95).